The sequence spans 958 residues: MutS protein homolog 4 (958 aa).

Disordered stretches follow at residues 51–110 (QEAA…SFGN) and 124–161 (PVGT…WTPQ). Residues 91–107 (SSSSSSSPAPASAPGSS) show a composition bias toward low complexity. Composition is skewed to polar residues over residues 124 to 138 (PVGT…TTYP) and 146 to 161 (SAGN…WTPQ). Residue 702–709 (GPNMSGKS) coordinates ATP.

The protein belongs to the DNA mismatch repair MutS family. In terms of assembly, heterooligomer of MSH4 and MSH5. As to expression, predominantly expressed in testis.

Its subcellular location is the chromosome. Its function is as follows. Involved in meiotic recombination. Required for reciprocal recombination and proper segregation of homologous chromosomes at meiosis. The sequence is that of MutS protein homolog 4 (Msh4) from Mus musculus (Mouse).